The primary structure comprises 457 residues: Multidrug resistance protein MdtK (457 aa).

The next 12 membrane-spanning stretches (helical) occupy residues 11–31 (LLAL…MGVV), 53–73 (IWLP…PVIA), 93–113 (VLAG…GYII), 127–147 (AVNY…FQVM), 160–180 (GMAM…IFIY), 188–208 (LGGV…FFCM), 243–263 (MPVA…ALLV), 276–296 (IALN…AAVT), 316–336 (RTGI…TVVF), 357–377 (LMLL…GSGV), 387–407 (IFFI…YILG), and 418–438 (PAGF…MMMW).

Belongs to the multi antimicrobial extrusion (MATE) (TC 2.A.66.1) family. MdtK subfamily.

It localises to the cell inner membrane. Its function is as follows. Multidrug efflux pump that functions probably as a Na(+)/drug antiporter. This Cronobacter sakazakii (strain ATCC BAA-894) (Enterobacter sakazakii) protein is Multidrug resistance protein MdtK.